We begin with the raw amino-acid sequence, 282 residues long: Pyridoxal 5'-phosphate synthase subunit PdxS (282 aa).

Aspartate 14 serves as a coordination point for D-ribose 5-phosphate. Lysine 71 serves as the catalytic Schiff-base intermediate with D-ribose 5-phosphate. Residue glycine 143 participates in D-ribose 5-phosphate binding. Position 155 (arginine 155) interacts with D-glyceraldehyde 3-phosphate. Residues glycine 204 and 225-226 contribute to the D-ribose 5-phosphate site; that span reads GS.

The protein belongs to the PdxS/SNZ family. In the presence of PdxT, forms a dodecamer of heterodimers.

The catalysed reaction is aldehydo-D-ribose 5-phosphate + D-glyceraldehyde 3-phosphate + L-glutamine = pyridoxal 5'-phosphate + L-glutamate + phosphate + 3 H2O + H(+). It functions in the pathway cofactor biosynthesis; pyridoxal 5'-phosphate biosynthesis. Catalyzes the formation of pyridoxal 5'-phosphate from ribose 5-phosphate (RBP), glyceraldehyde 3-phosphate (G3P) and ammonia. The ammonia is provided by the PdxT subunit. Can also use ribulose 5-phosphate and dihydroxyacetone phosphate as substrates, resulting from enzyme-catalyzed isomerization of RBP and G3P, respectively. The polypeptide is Pyridoxal 5'-phosphate synthase subunit PdxS (Treponema denticola (strain ATCC 35405 / DSM 14222 / CIP 103919 / JCM 8153 / KCTC 15104)).